The following is a 417-amino-acid chain: UDP-N-acetylglucosamine 1-carboxyvinyltransferase (417 aa).

22–23 is a binding site for phosphoenolpyruvate; sequence KN. Arginine 92 lines the UDP-N-acetyl-alpha-D-glucosamine pocket. The active-site Proton donor is cysteine 116. Cysteine 116 carries the post-translational modification 2-(S-cysteinyl)pyruvic acid O-phosphothioketal. Residues 121 to 125, aspartate 306, and isoleucine 328 contribute to the UDP-N-acetyl-alpha-D-glucosamine site; that span reads RPIDL.

Belongs to the EPSP synthase family. MurA subfamily.

Its subcellular location is the cytoplasm. The enzyme catalyses phosphoenolpyruvate + UDP-N-acetyl-alpha-D-glucosamine = UDP-N-acetyl-3-O-(1-carboxyvinyl)-alpha-D-glucosamine + phosphate. It participates in cell wall biogenesis; peptidoglycan biosynthesis. In terms of biological role, cell wall formation. Adds enolpyruvyl to UDP-N-acetylglucosamine. In Buchnera aphidicola subsp. Schizaphis graminum (strain Sg), this protein is UDP-N-acetylglucosamine 1-carboxyvinyltransferase.